The following is an 84-amino-acid chain: Large ribosomal subunit protein bL31B (84 aa).

The protein belongs to the bacterial ribosomal protein bL31 family. Type B subfamily. As to quaternary structure, part of the 50S ribosomal subunit.

The polypeptide is Large ribosomal subunit protein bL31B (Acinetobacter baumannii (strain AB307-0294)).